The following is a 137-amino-acid chain: Large ribosomal subunit protein uL16 (137 aa).

A compositionally biased stretch (basic residues) spans 1-17 (MLSPKRVKFRKRQRGRL). The interval 1–24 (MLSPKRVKFRKRQRGRLKGTDERG) is disordered.

The protein belongs to the universal ribosomal protein uL16 family. As to quaternary structure, part of the 50S ribosomal subunit.

Binds 23S rRNA and is also seen to make contacts with the A and possibly P site tRNAs. This chain is Large ribosomal subunit protein uL16, found in Leptospira borgpetersenii serovar Hardjo-bovis (strain JB197).